The chain runs to 108 residues: DNA-binding protein HBbu (108 aa).

Belongs to the bacterial histone-like protein family.

Its function is as follows. Histone-like DNA-binding protein which is capable of wrapping DNA to stabilize it, and thus to prevent its denaturation under extreme environmental conditions. This Borrelia turicatae protein is DNA-binding protein HBbu (hbb).